Consider the following 359-residue polypeptide: Peptide chain release factor 1 (359 aa).

Position 234 is an N5-methylglutamine (Gln234). The interval 283-305 (SQKDAARAADRRAQVGSGDRSER) is disordered.

This sequence belongs to the prokaryotic/mitochondrial release factor family. In terms of processing, methylated by PrmC. Methylation increases the termination efficiency of RF1.

The protein localises to the cytoplasm. Its function is as follows. Peptide chain release factor 1 directs the termination of translation in response to the peptide chain termination codons UAG and UAA. This is Peptide chain release factor 1 from Methylobacterium nodulans (strain LMG 21967 / CNCM I-2342 / ORS 2060).